The following is a 143-amino-acid chain: Large ribosomal subunit protein uL11 (143 aa).

This sequence belongs to the universal ribosomal protein uL11 family. In terms of assembly, part of the ribosomal stalk of the 50S ribosomal subunit. Interacts with L10 and the large rRNA to form the base of the stalk. L10 forms an elongated spine to which L12 dimers bind in a sequential fashion forming a multimeric L10(L12)X complex. In terms of processing, one or more lysine residues are methylated.

Its function is as follows. Forms part of the ribosomal stalk which helps the ribosome interact with GTP-bound translation factors. This is Large ribosomal subunit protein uL11 from Bifidobacterium longum subsp. infantis (strain ATCC 15697 / DSM 20088 / JCM 1222 / NCTC 11817 / S12).